The chain runs to 288 residues: Protein FANTASTIC FOUR 3 (288 aa).

Over residues 48-60 (HAEDTRNRNDDKA) the composition is skewed to basic and acidic residues. Disordered stretches follow at residues 48–100 (HAED…YYVQ), 146–172 (ETTT…PLTT), and 222–261 (NEFV…IENV). Positions 66-90 (SDSSGWSSLQSLSSGSSSSTKTTTS) are enriched in low complexity. The region spanning 165–217 (DLPPPLTTMRGFQCIQMRPHRENGRLVMTATNAPPRNGCFQADRSNGRLRLSI) is the FAF domain. Residues 223–256 (EFVENEEETIEPEETEEYEEEEEEEEDEDEDEVM) show a composition bias toward acidic residues.

This sequence belongs to the fantastic four family. As to expression, expressed in the shoot apex, stamens, young leaves and young siliques, but not in old leaves. Detected in provascular and vascular tissue, but not in the vegetative meristem. In inflorescences, restricted to the vasculature and absent from young flowers, except from anthers.

Its function is as follows. Able to repress WUS when constitutively overexpressed, but have no effect on CLV3. In Arabidopsis thaliana (Mouse-ear cress), this protein is Protein FANTASTIC FOUR 3 (FAF3).